The following is a 78-amino-acid chain: U-scoloptoxin(04)-Er1b (78 aa).

The N-terminal stretch at 1 to 24 is a signal peptide; sequence MTRHLIFAAVLLVCLFVCWNAVGA. A propeptide spanning residues 25 to 28 is cleaved from the precursor; it reads QDAR.

Belongs to the scoloptoxin-04 family. In terms of processing, contains 2 disulfide bonds. In terms of tissue distribution, expressed by the venom gland.

The protein localises to the secreted. This chain is U-scoloptoxin(04)-Er1b, found in Ethmostigmus rubripes (Giant centipede).